A 450-amino-acid chain; its full sequence is Salicylate synthase (450 aa).

The Proton donor role is filled by glutamate 252. 270-271 is a binding site for substrate; that stretch reads GT. Residue glutamate 297 participates in Mg(2+) binding. Substrate is bound by residues tyrosine 385, arginine 405, and 419–421; that span reads GAG. Positions 431 and 434 each coordinate Mg(2+). Lysine 438 is a binding site for substrate.

This sequence belongs to the anthranilate synthase component I family. Salicylate synthase subfamily. In terms of assembly, monomer. Mg(2+) serves as cofactor.

The enzyme catalyses chorismate = isochorismate. The catalysed reaction is isochorismate = salicylate + pyruvate. It catalyses the reaction chorismate = prephenate. The protein operates within siderophore biosynthesis; mycobactin biosynthesis. Functionally, involved in the incorporation of salicylate into the virulence-conferring salicylate-based siderophore mycobactin. Catalyzes the initial conversion of chorismate to yield the intermediate isochorismate (isochorismate synthase activity), and the subsequent elimination of the enolpyruvyl side chain in a lyase reaction to give salicylate (isochorismate pyruvate-lyase activity). In the absence of magnesium, MbtI displays a chorismate mutase activity and converts chorismate to prephenate. The protein is Salicylate synthase (mbtI) of Mycolicibacterium paratuberculosis (strain ATCC BAA-968 / K-10) (Mycobacterium paratuberculosis).